Here is a 244-residue protein sequence, read N- to C-terminus: Phosphoadenosine 5'-phosphosulfate reductase (244 aa).

The active-site Nucleophile; cysteine thiosulfonate intermediate is the cysteine 239.

Belongs to the PAPS reductase family. CysH subfamily.

The protein resides in the cytoplasm. It catalyses the reaction [thioredoxin]-disulfide + sulfite + adenosine 3',5'-bisphosphate + 2 H(+) = [thioredoxin]-dithiol + 3'-phosphoadenylyl sulfate. It functions in the pathway sulfur metabolism; hydrogen sulfide biosynthesis; sulfite from sulfate: step 3/3. In terms of biological role, catalyzes the formation of sulfite from phosphoadenosine 5'-phosphosulfate (PAPS) using thioredoxin as an electron donor. This chain is Phosphoadenosine 5'-phosphosulfate reductase, found in Yersinia enterocolitica serotype O:8 / biotype 1B (strain NCTC 13174 / 8081).